The sequence spans 288 residues: Quinate/shikimate dehydrogenase (288 aa).

Residues Lys-71 and Asp-107 each coordinate substrate. NAD(+) is bound by residues 132–135 (AGGA), 155–158 (NRRD), Lys-205, 232–235 (CVYN), and Gly-255.

Belongs to the shikimate dehydrogenase family. As to quaternary structure, homodimer.

The catalysed reaction is L-quinate + NAD(+) = 3-dehydroquinate + NADH + H(+). It catalyses the reaction L-quinate + NADP(+) = 3-dehydroquinate + NADPH + H(+). The enzyme catalyses shikimate + NADP(+) = 3-dehydroshikimate + NADPH + H(+). It carries out the reaction shikimate + NAD(+) = 3-dehydroshikimate + NADH + H(+). Its pathway is metabolic intermediate biosynthesis; chorismate biosynthesis; chorismate from D-erythrose 4-phosphate and phosphoenolpyruvate: step 4/7. Functionally, the actual biological function of YdiB remains unclear, nor is it known whether 3-dehydroshikimate or quinate represents the natural substrate. Catalyzes the reversible NAD-dependent reduction of both 3-dehydroshikimate (DHSA) and 3-dehydroquinate to yield shikimate (SA) and quinate, respectively. It can use both NAD or NADP for catalysis, however it has higher catalytic efficiency with NAD. The polypeptide is Quinate/shikimate dehydrogenase (Escherichia coli O1:K1 / APEC).